Here is a 138-residue protein sequence, read N- to C-terminus: Large ribosomal subunit protein bL19 (138 aa).

Belongs to the bacterial ribosomal protein bL19 family.

Functionally, this protein is located at the 30S-50S ribosomal subunit interface and may play a role in the structure and function of the aminoacyl-tRNA binding site. This is Large ribosomal subunit protein bL19 from Rickettsia felis (strain ATCC VR-1525 / URRWXCal2) (Rickettsia azadi).